The following is a 493-amino-acid chain: Lysine--tRNA ligase (493 aa).

The short motif at proline 26–asparagine 34 is the 'HIGH' region element. The short motif at alanine 270–serine 274 is the 'KMSKS' region element.

It belongs to the class-I aminoacyl-tRNA synthetase family.

The protein resides in the cytoplasm. The catalysed reaction is tRNA(Lys) + L-lysine + ATP = L-lysyl-tRNA(Lys) + AMP + diphosphate. The chain is Lysine--tRNA ligase (lysS) from Archaeoglobus fulgidus (strain ATCC 49558 / DSM 4304 / JCM 9628 / NBRC 100126 / VC-16).